Consider the following 562-residue polypeptide: Bacillolysin (562 aa).

A signal peptide spans 1–24 (MKKKKQALKVLLSVGILSSSFAFA). Positions 25–245 (HTSSAAPNNV…KQAAKPAAKP (221 aa)) are cleaved as a propeptide — activation peptide. Residues Asp303, Asp305, and Asp384 each coordinate Ca(2+). Zn(2+) is bound at residue His388. Glu389 is a catalytic residue. Positions 392 and 412 each coordinate Zn(2+). Positions 423, 429, 431, 433, 436, 439, 440, and 446 each coordinate Ca(2+). Catalysis depends on His477, which acts as the Proton donor.

Belongs to the peptidase M4 family. Ca(2+) serves as cofactor. It depends on Zn(2+) as a cofactor.

The protein localises to the secreted. It catalyses the reaction Similar, but not identical, to that of thermolysin.. Extracellular zinc metalloprotease. The chain is Bacillolysin from Priestia megaterium (strain ATCC 14581 / DSM 32 / CCUG 1817 / JCM 2506 / NBRC 15308 / NCIMB 9376 / NCTC 10342 / NRRL B-14308 / VKM B-512 / Ford 19) (Bacillus megaterium).